The primary structure comprises 494 residues: Integrin beta-like protein 1 (494 aa).

Residues 1–23 (MHPPGFKNFLLLVSSLFFIGLSA) form the signal peptide. Intrachain disulfides connect Cys-40–Cys-71, Cys-51–Cys-69, Cys-63–Cys-74, Cys-76–Cys-89, Cys-91–Cys-112, Cys-96–Cys-110, Cys-104–Cys-115, Cys-117–Cys-126, Cys-132–Cys-159, Cys-143–Cys-157, Cys-151–Cys-162, Cys-164–Cys-178, Cys-180–Cys-202, Cys-185–Cys-200, Cys-194–Cys-205, Cys-207–Cys-216, Cys-220–Cys-247, Cys-231–Cys-245, Cys-239–Cys-250, Cys-252–Cys-269, Cys-271–Cys-296, Cys-276–Cys-294, Cys-288–Cys-299, Cys-301–Cys-310, Cys-316–Cys-343, Cys-327–Cys-341, Cys-335–Cys-346, Cys-348–Cys-361, Cys-363–Cys-384, Cys-368–Cys-382, Cys-376–Cys-387, Cys-389–Cys-398, Cys-404–Cys-431, Cys-415–Cys-429, Cys-423–Cys-434, Cys-436–Cys-448, Cys-450–Cys-471, Cys-455–Cys-469, Cys-463–Cys-474, and Cys-476–Cys-485. I-EGF domains follow at residues 40-90 (CRLS…PLCE), 91-127 (CHDW…EACQ), 132-179 (CDLT…KFCE), 180-217 (CDDR…DKCE), 220-270 (CDIT…DTCE), 271-311 (CDER…KKCE), 316-362 (CPLS…KTCE), 363-399 (CDDR…KLCQ), 404-449 (CNMT…EFCD), and 450-486 (CDDR…NACE). The I repeat unit spans residues 51 to 95 (CRAPGQPPGSALCHDRGRCECGVCICHVTEPGTYFGPLCECHDWV). The tract at residues 51 to 494 (CRAPGQPPGS…CEIWLGTEYP (444 aa)) is cysteine-rich tandem repeats. Residues 96–142 (CETYDGKTCAGHGTCDCGKCKCDVGWSGEACQYPTKCDLTKKISNQM) form an II repeat. The stretch at 143–184 (CKNSQDVICSNAGTCHCGRCKCDNSDGHGLIYGKFCECDDRE) is one III repeat. One copy of the IV repeat lies at 185–230 (CIDDETEEICGGHGKCYCGNCYCEAGWHGDKCEFQCDITPWESKRR). Residues 231–275 (CTSPDGKVCSNRGTCVCGECSCHDVDPTGDWGDIHGDTCECDERD) form a V repeat. One copy of the VI repeat lies at 276-326 (CRAVYDRYSDDFCSGHGQCNCGRCDCRAGWYGKKCEHPKNCPLSAEESTRK). The VII repeat unit spans residues 327-367 (CQGSSDLPCSGRGRCECGRCTCYPPGDSRVYGKTCECDDRR). One copy of the VIII repeat lies at 368 to 414 (CEDLDGVVCGGRGTCSCGRCVCEKGWFGKLCQHPRKCNMTEEQSRSL). Asn-405 carries N-linked (GlcNAc...) asparagine glycosylation. Residues 415 to 454 (CESADGTLCSGKGSCHCGKCICSGEEWYISGEFCDCDDRD) form an IX repeat. The X repeat unit spans residues 455-494 (CDKHDGLICTGNGICSCGNCECWDGWNGNACEIWLGTEYP).

The protein localises to the secreted. In Rattus norvegicus (Rat), this protein is Integrin beta-like protein 1 (Itgbl1).